Reading from the N-terminus, the 128-residue chain is MIVKSLEDIQGTEDHQKGETWESRRFVLNKDNVGFSLNDTIIKAGTESYFWYKNHIEAVYCIEGEGEVEKKDTGEVWQLKPGTMYLLNDNDKHYLRAKTQMRMVCVFNPALVGTETHDEDGVYPLLAE.

The protein belongs to the ectoine synthase family.

It carries out the reaction (2S)-4-acetamido-2-aminobutanoate = L-ectoine + H2O. The protein operates within amine and polyamine biosynthesis; ectoine biosynthesis; L-ectoine from L-aspartate 4-semialdehyde: step 3/3. In terms of biological role, catalyzes the circularization of gamma-N-acetyl-alpha,gamma-diaminobutyric acid (ADABA) to ectoine (1,4,5,6-tetrahydro-2-methyl-4-pyrimidine carboxylic acid), which is an excellent osmoprotectant. This Oceanobacillus iheyensis (strain DSM 14371 / CIP 107618 / JCM 11309 / KCTC 3954 / HTE831) protein is L-ectoine synthase.